Consider the following 785-residue polypeptide: E3 UFM1-protein ligase 1 homolog (785 aa).

The segment at 404–482 (NASFQDQDDD…AGGGGGNKKT (79 aa)) is disordered.

Belongs to the UFL1 family.

In terms of biological role, E3 UFM1-protein ligase that mediates ufmylation of target proteins. The sequence is that of E3 UFM1-protein ligase 1 homolog from Drosophila persimilis (Fruit fly).